The chain runs to 501 residues: Lycopene beta cyclase, chloroplastic (501 aa).

The transit peptide at 1 to 48 (MDTLLKTPNKLDFFIPQFHGFERLCSNNPYHSRVRLGVKKRAIKIVSS) directs the protein to the chloroplast. An N-acetylvaline modification is found at V49. Residue 85–113 (LAIVGGGPAGLAVAQQVSEAGLSVCSIDP) coordinates NAD(+).

Belongs to the lycopene cyclase family.

It is found in the plastid. Its subcellular location is the chloroplast. The enzyme catalyses a carotenoid psi-end group = a carotenoid beta-end derivative. It functions in the pathway carotenoid biosynthesis; beta-carotene biosynthesis. Its pathway is carotenoid biosynthesis; beta-zeacarotene biosynthesis. Its function is as follows. Involved in carotenoid biosynthesis. Catalyzes the double cyclization reaction which converts lycopene to beta-carotene and neurosporene to beta-zeacarotene. Major lycopene beta-cyclase that does not seem to be involved in neoxanthin synthesis. Involved in salt tolerance improvement by increasing synthesis of carotenoids, which impairs reactive oxygen species (ROS) and protects the photosynthetic system under salt stress. The polypeptide is Lycopene beta cyclase, chloroplastic (Arabidopsis thaliana (Mouse-ear cress)).